Here is a 181-residue protein sequence, read N- to C-terminus: Inner kinetochore subunit MCM16 (181 aa).

A coiled-coil region spans residues 112-171 (KQLIESRAERDELMSKLIELSSKFPKPTIPPDDSDTAGKQVEVEKENETIQELMIALQIH).

Belongs to the CENP-H/MCM16 family. Component of the heterotrimeric kinetochore subcomplex CTF3, which consists of CTF3, MCM16 and MCM22. The CTF3 subcomplex is part of a larger constitutive centromere-associated network (CCAN) (also known as central kinetochore CTF19 complex in yeast), which is composed of at least AME1, CHL4, CNN1, CTF3, CTF19, IML3, MCM16, MCM21, MCM22, MHF1, MHF2, MIF2, NKP1, NKP2, OKP1 and WIP1. Interacts with CTF19.

It is found in the nucleus. Its subcellular location is the chromosome. It localises to the centromere. The protein localises to the kinetochore. Functionally, component of the kinetochore, a multiprotein complex that assembles on centromeric DNA and attaches chromosomes to spindle microtubules, mediating chromosome segregation and sister chromatid segregation during meiosis and mitosis. Component of the inner kinetochore constitutive centromere-associated network (CCAN), which serves as a structural platform for outer kinetochore assembly. The chain is Inner kinetochore subunit MCM16 (MCM16) from Saccharomyces cerevisiae (strain ATCC 204508 / S288c) (Baker's yeast).